The chain runs to 301 residues: Ethylmalonyl-CoA decarboxylase (301 aa).

Position 211 is an N6-acetyllysine; alternate (K211). N6-succinyllysine; alternate is present on K211. An N6-succinyllysine modification is found at K295.

The protein belongs to the enoyl-CoA hydratase/isomerase family.

It localises to the cytoplasm. It is found in the cytosol. It catalyses the reaction (2S)-ethylmalonyl-CoA + H(+) = butanoyl-CoA + CO2. The catalysed reaction is (S)-methylmalonyl-CoA + H(+) = propanoyl-CoA + CO2. The enzyme catalyses (2R)-ethylmalonyl-CoA + H(+) = butanoyl-CoA + CO2. Functionally, decarboxylates ethylmalonyl-CoA, a potentially toxic metabolite, to form butyryl-CoA, suggesting it might be involved in metabolite proofreading. Acts preferentially on (S)-ethylmalonyl-CoA but also has some activity on the (R)-isomer. Also has methylmalonyl-CoA decarboxylase activity at lower level. In Pongo abelii (Sumatran orangutan), this protein is Ethylmalonyl-CoA decarboxylase (ECHDC1).